Reading from the N-terminus, the 169-residue chain is Peptide methionine sulfoxide reductase MsrA (169 aa).

Cys-10 is a catalytic residue.

Belongs to the MsrA Met sulfoxide reductase family.

It carries out the reaction L-methionyl-[protein] + [thioredoxin]-disulfide + H2O = L-methionyl-(S)-S-oxide-[protein] + [thioredoxin]-dithiol. The enzyme catalyses [thioredoxin]-disulfide + L-methionine + H2O = L-methionine (S)-S-oxide + [thioredoxin]-dithiol. Functionally, has an important function as a repair enzyme for proteins that have been inactivated by oxidation. Catalyzes the reversible oxidation-reduction of methionine sulfoxide in proteins to methionine. This chain is Peptide methionine sulfoxide reductase MsrA, found in Streptococcus uberis (strain ATCC BAA-854 / 0140J).